We begin with the raw amino-acid sequence, 782 residues long: Translation initiation factor IF-2 (782 aa).

The segment at 47–196 (DNAIDGTNKK…TPPKPKELPE (150 aa)) is disordered. Basic and acidic residues predominate over residues 53–65 (TNKKAEAPKKETT). A compositionally biased stretch (polar residues) spans 66–81 (SNENGNSKGPNKPNMT). 2 stretches are compositionally biased toward low complexity: residues 82 to 93 (NSNEKSNKPNNP) and 118 to 170 (NTSK…NNKG). In terms of domain architecture, tr-type G spans 283–452 (ERPPVVTIMG…LLVSEVEELK (170 aa)). The G1 stretch occupies residues 292–299 (GHVDHGKT). 292–299 (GHVDHGKT) contacts GTP. The interval 317-321 (GITQH) is G2. Positions 338–341 (DTPG) are G3. Residues 338–342 (DTPGH) and 392–395 (NKID) each bind GTP. Residues 392 to 395 (NKID) are G4. Residues 428 to 430 (SAK) form a G5 region.

Belongs to the TRAFAC class translation factor GTPase superfamily. Classic translation factor GTPase family. IF-2 subfamily.

It is found in the cytoplasm. Its function is as follows. One of the essential components for the initiation of protein synthesis. Protects formylmethionyl-tRNA from spontaneous hydrolysis and promotes its binding to the 30S ribosomal subunits. Also involved in the hydrolysis of GTP during the formation of the 70S ribosomal complex. The sequence is that of Translation initiation factor IF-2 from Listeria monocytogenes serotype 4b (strain CLIP80459).